We begin with the raw amino-acid sequence, 308 residues long: Ribosomal RNA large subunit methyltransferase F (308 aa).

This sequence belongs to the methyltransferase superfamily. METTL16/RlmF family.

Its subcellular location is the cytoplasm. It carries out the reaction adenosine(1618) in 23S rRNA + S-adenosyl-L-methionine = N(6)-methyladenosine(1618) in 23S rRNA + S-adenosyl-L-homocysteine + H(+). In terms of biological role, specifically methylates the adenine in position 1618 of 23S rRNA. The protein is Ribosomal RNA large subunit methyltransferase F of Salmonella arizonae (strain ATCC BAA-731 / CDC346-86 / RSK2980).